Here is a 431-residue protein sequence, read N- to C-terminus: UPF0597 protein TDE_2144 (431 aa).

It belongs to the UPF0597 family.

The polypeptide is UPF0597 protein TDE_2144 (Treponema denticola (strain ATCC 35405 / DSM 14222 / CIP 103919 / JCM 8153 / KCTC 15104)).